Here is a 324-residue protein sequence, read N- to C-terminus: uncharacterized protein (324 aa).

8 consecutive transmembrane segments (helical) span residues 5 to 24, 39 to 61, 68 to 90, 95 to 117, 130 to 152, 162 to 179, 199 to 218, and 228 to 250; these read VIGI…NRAM, FIFM…PLLL, FYWI…FAAA, WLIA…LFYV, QKIP…LIQL, MLLF…AYPL, LGMT…YGWW, and TVQS…FWAT.

The protein resides in the cell membrane. This is an uncharacterized protein from Bacillus subtilis (strain 168).